The chain runs to 272 residues: Short-chain dehydrogenase reductase ATA1 (272 aa).

NADP(+) is bound at residue 14-38; it reads IITGGARGIGAATARLFTENGAYVI. Position 143 (S143) interacts with substrate. The Proton acceptor role is filled by Y156. K160 serves as a coordination point for NADP(+).

Belongs to the short-chain dehydrogenases/reductases (SDR) family. Expressed specifically in tapetal cells.

Functionally, may play a role in tapetum development. This is Short-chain dehydrogenase reductase ATA1 from Arabidopsis thaliana (Mouse-ear cress).